Consider the following 194-residue polypeptide: FMN-dependent NADH:quinone oxidoreductase (194 aa).

FMN contacts are provided by residues Ser-10, 16–18 (SQS), 91–94 (MYNF), and 135–138 (TRGG).

Belongs to the azoreductase type 1 family. Homodimer. It depends on FMN as a cofactor.

The catalysed reaction is 2 a quinone + NADH + H(+) = 2 a 1,4-benzosemiquinone + NAD(+). It carries out the reaction N,N-dimethyl-1,4-phenylenediamine + anthranilate + 2 NAD(+) = 2-(4-dimethylaminophenyl)diazenylbenzoate + 2 NADH + 2 H(+). Quinone reductase that provides resistance to thiol-specific stress caused by electrophilic quinones. In terms of biological role, also exhibits azoreductase activity. Catalyzes the reductive cleavage of the azo bond in aromatic azo compounds to the corresponding amines. This chain is FMN-dependent NADH:quinone oxidoreductase, found in Vibrio parahaemolyticus serotype O3:K6 (strain RIMD 2210633).